The following is a 2752-amino-acid chain: Serine/arginine repetitive matrix protein 2 (2752 aa).

Methionine 1 carries the post-translational modification N-acetylmethionine. Positions 60–92 (HERKRRVELRCLELEEMMEEQGYEEQQIQEKVA) form a coiled coil. The residue at position 101 (lysine 101) is an N6-acetyllysine. Residues lysine 108 and lysine 130 each participate in a glycyl lysine isopeptide (Lys-Gly) (interchain with G-Cter in SUMO2) cross-link. A disordered region spans residues 141–2131 (ISDSYVDGSS…MSPTPLDRCR (1991 aa)). Tyrosine 145 carries the phosphotyrosine modification. Lysine 169 bears the N6-acetyllysine mark. Low complexity predominate over residues 175 to 185 (RESSSSRSPTP). Basic residues-rich tracts occupy residues 186–197 (KQKKKKKKKDRG) and 207–249 (RERK…KRSR). The segment at 197–259 (GRRSESSSPR…STTPAPKSRR (63 aa)) is sufficient for RNA-binding. Residues serine 220 and serine 222 each carry the phosphoserine modification. A compositionally biased stretch (low complexity) spans 263-290 (STSADSASSSDTSRSRSRSAAAKTHTTA). Threonine 286 is modified (phosphothreonine). A phosphoserine mark is found at serine 295, serine 297, serine 300, serine 322, and serine 323. Residues 313–333 (PGTTSTQRPSSPETATKQPSS) are compositionally biased toward polar residues. Residues 335 to 347 (YEDKDKDKKEKSA) show a composition bias toward basic and acidic residues. The span at 348–360 (TRPSPSPERSSTG) shows a compositional bias: low complexity. Phosphoserine is present on residues serine 351, serine 353, serine 357, and serine 358. Phosphothreonine is present on residues threonine 359 and threonine 367. Position 377 is a phosphoserine (serine 377). The span at 380–398 (PLATTPLSQEPVNPPSEAS) shows a compositional bias: polar residues. Phosphothreonine occurs at positions 383 and 384. Phosphoserine is present on residues serine 387, serine 395, serine 398, serine 404, and serine 408. Positions 399–410 (PTRDRSPPKSPE) are enriched in basic and acidic residues. Low complexity predominate over residues 411 to 421 (KLPQSSSSESS). Serine 424, serine 435, serine 436, serine 437, serine 440, and serine 454 each carry phosphoserine. The segment covering 461 to 483 (NRSHGRAKRDKSHSHTPSRRMGR) has biased composition (basic residues). Residues serine 484, serine 486, serine 506, serine 508, serine 510, serine 534, serine 536, and serine 543 each carry the phosphoserine modification. The segment covering 491–536 (KRGRSRSRTPTKRGHSRSRSPQWRRSRSAQRWGRSRSPQRRGRSRS) has biased composition (basic residues). Over residues 537-546 (PQRPGWSRSR) the composition is skewed to low complexity. 3 stretches are compositionally biased toward basic residues: residues 547-564 (NTQR…RSHS), 571-723 (GRSR…RRGR), and 732-742 (NKSRTSQRRSR). Phosphoserine occurs at positions 702, 704, and 706. Serine 778, serine 780, and serine 783 each carry phosphoserine. The segment covering 790–805 (SQTPPRRSRSGSSQPK) has biased composition (low complexity). A compositionally biased stretch (basic residues) spans 806-816 (AKSRTPPRRSR). Residues 828–841 (KTPSRQSHSSSSPH) are compositionally biased toward low complexity. Phosphoserine occurs at positions 846 and 854. Positions 849-869 (PPRQGSITSPQANEQSVTPQR) are enriched in polar residues. The residue at position 856 (threonine 856) is a Phosphothreonine. Phosphoserine occurs at positions 857 and 864. Threonine 866 is subject to Phosphothreonine. 14 positions are modified to phosphoserine: serine 871, serine 875, serine 876, serine 908, serine 935, serine 950, serine 952, serine 954, serine 957, serine 968, serine 970, serine 972, serine 973, and serine 974. Low complexity-rich tracts occupy residues 901 to 917 (SSTP…SPQP) and 924 to 945 (SPRQ…TSRT). 2 positions are modified to phosphothreonine: threonine 977 and threonine 983. Serine 992 and serine 994 each carry phosphoserine. Tyrosine 996 is subject to Phosphotyrosine. Threonine 1003 is modified (phosphothreonine). Over residues 1008-1017 (SLSGSKSPCP) the composition is skewed to low complexity. Residues serine 1010, serine 1014, serine 1024, serine 1028, serine 1032, and serine 1042 each carry the phosphoserine modification. Residues 1040–1064 (KSSTPPGESYFGVSSLQLKGQSQTS) show a composition bias toward polar residues. Threonine 1043 carries the phosphothreonine modification. Tyrosine 1049 is modified (phosphotyrosine). Serine 1064, serine 1069, serine 1072, serine 1073, serine 1083, serine 1099, serine 1101, serine 1102, and serine 1103 each carry phosphoserine. Positions 1071–1092 (TSSPEVRQSHSESPSLQSKSQT) are enriched in polar residues. Residues 1093–1104 (SPKGGRSRSSSP) are compositionally biased toward low complexity. Threonine 1106 carries the post-translational modification Phosphothreonine. Phosphoserine occurs at positions 1112, 1122, 1124, 1129, 1132, 1152, 1179, 1188, and 1198. Positions 1132–1159 (SPEQSRFQSDSSSYPTVDSNSLLGQSRL) are enriched in polar residues. Basic and acidic residues predominate over residues 1204-1214 (DTLRTPPRERS). Threonine 1208 carries the phosphothreonine modification. A phosphoserine mark is found at serine 1214, serine 1219, serine 1227, serine 1254, serine 1257, serine 1258, serine 1266, serine 1270, and serine 1271. Over residues 1216–1233 (AGSSPETKEQNSALPTSS) the composition is skewed to polar residues. Positions 1283–1292 (TLDQSQSQAS) are enriched in polar residues. A phosphoserine mark is found at serine 1311, serine 1318, serine 1320, serine 1326, serine 1329, serine 1336, serine 1348, serine 1368, serine 1382, serine 1383, serine 1384, serine 1387, serine 1401, serine 1403, and serine 1404. Over residues 1318-1328 (SNSPLRENSFG) the composition is skewed to polar residues. The span at 1376–1386 (TRSSGHSSSEL) shows a compositional bias: polar residues. Residue threonine 1413 is modified to Phosphothreonine. Phosphoserine is present on residues serine 1415, serine 1421, serine 1423, and serine 1424. Residue threonine 1434 is modified to Phosphothreonine. Residues 1441 to 1452 (SGSSPGLRDGSG) show a composition bias toward low complexity. 2 positions are modified to phosphoserine: serine 1444 and serine 1451. The residue at position 1453 (threonine 1453) is a Phosphothreonine. The span at 1453–1463 (TPSRHSLSGSS) shows a compositional bias: polar residues. Residues serine 1458, serine 1460, serine 1462, and serine 1463 each carry the phosphoserine modification. At threonine 1472 the chain carries Phosphothreonine. Phosphoserine occurs at positions 1482 and 1483. Threonine 1492 bears the Phosphothreonine mark. 4 positions are modified to phosphoserine: serine 1497, serine 1499, serine 1501, and serine 1502. Threonine 1511 carries the phosphothreonine modification. Phosphoserine occurs at positions 1517, 1519, 1521, and 1522. A Phosphothreonine modification is found at threonine 1531. Residues 1534–1544 (GQRSRSGSSQE) are compositionally biased toward polar residues. Phosphoserine is present on residues serine 1537, serine 1539, serine 1541, serine 1542, and serine 1552. The segment covering 1555-1567 (ERSESDSSPDSKA) has biased composition (basic and acidic residues). Basic residues predominate over residues 1568–1577 (KTRTPLRQRS). Phosphoserine occurs at positions 1577, 1579, 1581, 1582, 1598, 1600, 1601, 1616, 1620, 1621, 1648, 1658, 1691, 1693, and 1694. The span at 1638–1657 (SGSSSKGRGPSPEGSSSTES) shows a compositional bias: low complexity. Basic residues predominate over residues 1681-1691 (KSRTPPRRRSS). Threonine 1698 carries the phosphothreonine modification. Residues serine 1727, serine 1729, serine 1731, serine 1732, serine 1762, and serine 1764 each carry the phosphoserine modification. Composition is skewed to basic residues over residues 1769 to 1789 (GLQR…RRRD) and 1798 to 1816 (SRRR…RRRG). Residues serine 1818, serine 1822, serine 1854, serine 1857, serine 1876, and serine 1878 each carry the phosphoserine modification. Over residues 1834–1854 (SSRRRRGRSRTPPTSRKRSRS) the composition is skewed to basic residues. Basic residues predominate over residues 1862 to 2068 (KRSRSRASPA…PRTARGKRSL (207 aa)). Position 1880 is a phosphothreonine (threonine 1880). Serine 1884 and serine 1890 each carry phosphoserine. Threonine 1892 carries the post-translational modification Phosphothreonine. Serine 1893, serine 1916, serine 1919, serine 1923, and serine 1925 each carry phosphoserine. 2 positions are modified to phosphothreonine: threonine 1927 and threonine 1931. Serine 1946 and serine 1948 each carry phosphoserine. 2 positions are modified to phosphothreonine: threonine 1950 and threonine 1954. Residues serine 1958 and serine 1960 each carry the phosphoserine modification. Phosphothreonine occurs at positions 1962 and 1966. Phosphoserine is present on residues serine 1970, serine 1972, and serine 1975. Threonine 1978 carries the phosphothreonine modification. Phosphoserine is present on residues serine 1984, serine 1987, serine 1996, serine 1999, serine 2008, serine 2011, serine 2018, and serine 2020. Residue threonine 2022 is modified to Phosphothreonine. A phosphoserine mark is found at serine 2030 and serine 2032. The residue at position 2034 (threonine 2034) is a Phosphothreonine. Serine 2042, serine 2044, serine 2046, and serine 2067 each carry phosphoserine. Threonine 2069 bears the Phosphothreonine mark. The segment covering 2070-2095 (RSPPAIRRRSASGSSSDRSRSATPPA) has biased composition (low complexity). Residues serine 2071 and serine 2090 each carry the phosphoserine modification. Threonine 2092 is subject to Phosphothreonine. A compositionally biased stretch (polar residues) spans 2097–2124 (RNHSGSRTPPVALNSSRMSCFSRPSMSP). 2 positions are modified to phosphoserine: serine 2100 and serine 2102. Threonine 2104 is subject to Phosphothreonine. Residues serine 2118, serine 2121, serine 2123, and serine 2132 each carry the phosphoserine modification. Threonine 2144 carries the phosphothreonine modification. Omega-N-methylarginine occurs at positions 2194, 2207, 2231, and 2246. Position 2272 is a phosphoserine (serine 2272). Residues arginine 2274 and arginine 2288 each carry the omega-N-methylarginine modification. 3 positions are modified to phosphothreonine: threonine 2289, threonine 2291, and threonine 2302. Serine 2310 is modified (phosphoserine). A disordered region spans residues 2311 to 2342 (LTGSGTPPTAANYPSSSRTPQAPASANLVGPR). Residues threonine 2316 and threonine 2329 each carry the phosphothreonine modification. A compositionally biased stretch (polar residues) spans 2317–2334 (PPTAANYPSSSRTPQAPA). Serine 2335 is subject to Phosphoserine. Residue arginine 2342 is modified to Omega-N-methylarginine. Phosphoserine occurs at positions 2343, 2368, and 2376. At threonine 2381 the chain carries Phosphothreonine. A Phosphoserine modification is found at serine 2382. Arginine 2384 is subject to Asymmetric dimethylarginine; alternate. Arginine 2384 is subject to Omega-N-methylarginine; alternate. The interval 2389–2752 (AYERVSGRTS…PMRHRSSRSP (364 aa)) is disordered. Residues serine 2394, serine 2398, and serine 2407 each carry the phosphoserine modification. Threonine 2409 bears the Phosphothreonine mark. 6 positions are modified to phosphoserine: serine 2412, serine 2415, serine 2426, serine 2429, serine 2449, and serine 2453. The span at 2426–2439 (SPSSRMGQAPSQSL) shows a compositional bias: polar residues. The span at 2455-2473 (FSDQSRCLIAQTTPVAGSQ) shows a compositional bias: polar residues. 3 stretches are compositionally biased toward low complexity: residues 2474 to 2487 (SLSS…TSSA), 2515 to 2526 (AQQPSALAALQP), and 2533 to 2567 (SSSS…EGSS). Phosphoserine is present on serine 2581. Position 2583 is a phosphothreonine (threonine 2583). A Glycyl lysine isopeptide (Lys-Gly) (interchain with G-Cter in SUMO2) cross-link involves residue lysine 2587. Position 2599 is a phosphothreonine (threonine 2599). Residues 2608 to 2648 (SSSSSSSSSSSSSSSSSSSSSSSSSSSSSSSSSSSSSSSSS) are compositionally biased toward low complexity. Residues 2651–2668 (PAKPGPQALPKPASPKKP) show a composition bias toward pro residues. Serine 2664, serine 2675, serine 2677, serine 2684, serine 2688, serine 2690, serine 2692, serine 2694, serine 2702, and serine 2706 each carry phosphoserine. Basic and acidic residues predominate over residues 2669–2689 (PPGERRSRSPRKPIDSLRDSR). The segment covering 2707–2716 (PRDQQSSSSE) has biased composition (low complexity). Residues 2717-2729 (RGSRRGQRGDSRS) are compositionally biased toward basic and acidic residues. Threonine 2738 carries the post-translational modification Phosphothreonine. Serine 2740 bears the Phosphoserine mark. Positions 2743 to 2752 (PMRHRSSRSP) are enriched in basic residues.

It belongs to the CWC21 family. Component of pre-catalytic, catalytic and post-catalytic spliceosome complexes. Found in a pre-mRNA splicing complex with SFRS4, SFRS5, SNRP70, SNRPA1, SRRM1 and SRRM2. Component of the minor spliceosome, which splices U12-type introns. Interacts with DHX8. Interacts with CACTIN. As to expression, expressed in liver, placenta, and white blood cells.

The protein resides in the nucleus. It localises to the nucleus speckle. Required for pre-mRNA splicing as component of the spliceosome. As a component of the minor spliceosome, involved in the splicing of U12-type introns in pre-mRNAs. The sequence is that of Serine/arginine repetitive matrix protein 2 (SRRM2) from Homo sapiens (Human).